The primary structure comprises 209 residues: Fibroblast growth factor 21 (209 aa).

The first 28 residues, 1–28 (MDSDETGFEHSGLWVSVLAGLLLGACQA), serve as a signal peptide directing secretion. Positions 143 to 209 (PLHLPGNKSP…SQGRSPSYAS (67 aa)) are disordered. The segment covering 168–186 (PGLPPALPEPPGILAPQPP) has biased composition (pro residues).

This sequence belongs to the heparin-binding growth factors family. Interacts (via C-terminus) with KLB; this interaction is direct. Interacts with FGFR4.

It localises to the secreted. Functionally, stimulates glucose uptake in differentiated adipocytes via the induction of glucose transporter SLC2A1/GLUT1 expression (but not SLC2A4/GLUT4 expression). Activity requires the presence of KLB. Regulates systemic glucose homeostasis and insulin sensitivity. This is Fibroblast growth factor 21 (FGF21) from Homo sapiens (Human).